The chain runs to 773 residues: Ribosomal protein S6 kinase alpha-4 (773 aa).

In terms of domain architecture, Protein kinase 1 spans 33–301 (FALLKVLGTG…AQEVKSHPFF (269 aa)). Residues 39-47 (LGTGAYGKV) and K65 contribute to the ATP site. D161 serves as the catalytic Proton acceptor. S196 carries the post-translational modification Phosphoserine; by autocatalysis. An AGC-kinase C-terminal domain is found at 302 to 371 (QGLDWVALAA…VAPSILFDHN (70 aa)). Phosphoserine; by MAPK1, MAPK3 and MAPK14 is present on S343. S347 is modified (phosphoserine). 2 positions are modified to phosphoserine; by autocatalysis: S360 and S365. Residues 417–425 (LGQGSFSVC) and K440 each bind ATP. A Protein kinase 2 domain is found at 417–674 (LGQGSFSVCR…LEGLRSSSWL (258 aa)). Residue D530 is the Proton acceptor of the active site. T542 bears the Phosphothreonine mark. At T568 the chain carries Phosphothreonine; by MAPK1, MAPK3 and MAPK14. Phosphoserine occurs at positions 634 and 678. Disordered regions lie at residues 674 to 696 (LQDG…SSGP) and 728 to 773 (AKRR…LSPS). T687 carries the phosphothreonine modification. S737 and S745 each carry phosphoserine; by autocatalysis.

The protein belongs to the protein kinase superfamily. AGC Ser/Thr protein kinase family. S6 kinase subfamily. In terms of assembly, forms a complex with either MAPK1/ERK2 or MAPK3/ERK1 in quiescent cells which transiently dissociates following mitogenic stimulation. Also associates with MAPK14/p38-alpha. Activated RPS6KA4 associates with and phosphorylates the NF-kappa-B p65 subunit RELA. Mg(2+) serves as cofactor. Ser-343 and Thr-568 phosphorylation is required for kinase activity. Ser-343 and Ser-196 are autophosphorylated by the C-terminal kinase domain, and their phosphorylation is essential for the catalytic activity of the N-terminal kinase domain. Phosphorylated at Ser-343, Thr-568 and Thr-687 by MAPK1/ERK2, MAPK3/ERK1 and MAPK14/p38-alpha. Autophosphorylated at Ser-737 and Ser-745 by the N-terminal kinase domain.

It localises to the nucleus. It catalyses the reaction L-seryl-[protein] + ATP = O-phospho-L-seryl-[protein] + ADP + H(+). The enzyme catalyses L-threonyl-[protein] + ATP = O-phospho-L-threonyl-[protein] + ADP + H(+). Activated by phosphorylation at Ser-343, Thr-568 and Thr-687 by MAPK1/ERK2, MAPK3/ERK1 and MAPK14/p38-alpha, and by further autophosphorylation of Ser-196, Ser-360 and Ser-365 by the activated C-terminal kinase domain. Functionally, serine/threonine-protein kinase that is required for the mitogen or stress-induced phosphorylation of the transcription factors CREB1 and ATF1 and for the regulation of the transcription factor RELA, and that contributes to gene activation by histone phosphorylation and functions in the regulation of inflammatory genes. Phosphorylates CREB1 and ATF1 in response to mitogenic or stress stimuli such as UV-C irradiation, epidermal growth factor (EGF) and anisomycin. Plays an essential role in the control of RELA transcriptional activity in response to TNF. Phosphorylates 'Ser-10' of histone H3 in response to mitogenics, stress stimuli and EGF, which results in the transcriptional activation of several immediate early genes, including proto-oncogenes c-fos/FOS and c-jun/JUN. May also phosphorylate 'Ser-28' of histone H3. Mediates the mitogen- and stress-induced phosphorylation of high mobility group protein 1 (HMGN1/HMG14). In lipopolysaccharide-stimulated primary macrophages, acts downstream of the Toll-like receptor TLR4 to limit the production of pro-inflammatory cytokines. Functions probably by inducing transcription of the MAP kinase phosphatase DUSP1 and the anti-inflammatory cytokine interleukin 10 (IL10), via CREB1 and ATF1 transcription factors. The polypeptide is Ribosomal protein S6 kinase alpha-4 (Rps6ka4) (Mus musculus (Mouse)).